We begin with the raw amino-acid sequence, 183 residues long: MVDPPGNDDDHGDLDALDFSAAHTNEASPLDALDDYAPVQTDDAEGDLDALHALTERDEEPELELFTVTNPQGSVSVSTLMDGRIQHVELTDKATSMSEAQLADEIFVIADLARQKARASQYTFMVENIGELTDEDAEGSALLREFVGMTLNLPTPEEAAAAEAEVFATRYDVDYTSRYKADD.

A compositionally biased stretch (acidic residues) spans 1 to 16; the sequence is MVDPPGNDDDHGDLDA. Positions 1–32 are disordered; the sequence is MVDPPGNDDDHGDLDALDFSAAHTNEASPLDA.

In Mycobacterium tuberculosis (strain ATCC 25618 / H37Rv), this protein is ESX-1 secretion-associated protein EspH.